Here is an 821-residue protein sequence, read N- to C-terminus: Pentatricopeptide repeat-containing protein At4g04790, mitochondrial (821 aa).

The N-terminal 74 residues, 1-74, are a transit peptide targeting the mitochondrion; it reads MVVSKVNKSL…KLLHVTTSDK (74 aa). PPR repeat units lie at residues 372–406, 407–441, 442–476, 477–511, 512–542, 544–574, and 578–612; these read SSTS…GLMI, SADI…SVKP, NTEN…NLEP, NSSM…GVKP, DSIT…AGVQ, TKRI…PDVP, and QNEL…ECHV. The segment at 801–821 is disordered; sequence AFSQAPNKKKPKKKMIVLSTK.

This sequence belongs to the PPR family. P subfamily.

The protein resides in the mitochondrion. The sequence is that of Pentatricopeptide repeat-containing protein At4g04790, mitochondrial from Arabidopsis thaliana (Mouse-ear cress).